A 263-amino-acid polypeptide reads, in one-letter code: Protein maestro (263 aa).

The disordered stretch occupies residues 1 to 21 (MDQTPRRMLGQPLSSPATQPK). One copy of the HEAT repeat lies at 128–163 (SFFIDITLQTRTLLDDENDSLRYSAFVLFGQLADLA).

It localises to the nucleus. The protein localises to the nucleolus. The polypeptide is Protein maestro (MRO) (Bos taurus (Bovine)).